The following is a 442-amino-acid chain: Trigger factor (442 aa).

Residues 176 to 259 (GDFISLSLYV…VNAVIEISSP (84 aa)) enclose the PPIase FKBP-type domain.

Belongs to the FKBP-type PPIase family. Tig subfamily.

It is found in the cytoplasm. The catalysed reaction is [protein]-peptidylproline (omega=180) = [protein]-peptidylproline (omega=0). In terms of biological role, involved in protein export. Acts as a chaperone by maintaining the newly synthesized protein in an open conformation. Functions as a peptidyl-prolyl cis-trans isomerase. This chain is Trigger factor, found in Chlamydia trachomatis serovar A (strain ATCC VR-571B / DSM 19440 / HAR-13).